The chain runs to 336 residues: Glutamyl endopeptidase (336 aa).

The N-terminal stretch at 1-29 is a signal peptide; the sequence is MKGKFLKVSSLFVATLTTATLVSSPAANA. The propeptide occupies 30 to 68; that stretch reads LSSKAMDNHPQQTQSSKQQTPKIQKGGNLKPLEQREHAN. The segment at 34 to 61 is disordered; it reads AMDNHPQQTQSSKQQTPKIQKGGNLKPL. The span at 39 to 51 shows a compositional bias: low complexity; it reads PQQTQSSKQQTPK. Active-site charge relay system residues include His-119, Asp-161, and Ser-237. Residues 283-336 form a disordered region; that stretch reads FANDDQPNNPDNPDNPNNPDNPNNPDEPNNPDNPNNPDNPDNGDTNNSDNPDAA. Low complexity predominate over residues 286-336; sequence DDQPNNPDNPDNPNNPDNPNNPDEPNNPDNPNNPDNPDNGDTNNSDNPDAA. Repeat copies occupy residues 289–291, 292–294, 295–297, 298–300, 301–303, 304–306, 310–312, 313–315, 316–318, 319–321, and 322–324. Residues 289-324 form an 11 X 3 AA repeats of P-[DN]-N region; the sequence is PNNPDNPDNPNNPDNPNNPDEPNNPDNPNNPDNPDN.

Belongs to the peptidase S1B family. In terms of processing, proteolytically cleaved by aureolysin (aur). This cleavage leads to the activation of SspA.

It is found in the secreted. The enzyme catalyses Preferential cleavage: Glu-|-Xaa, Asp-|-Xaa.. In terms of biological role, preferentially cleaves peptide bonds on the carboxyl-terminal side of aspartate and glutamate. Along with other extracellular proteases it is involved in colonization and infection of human tissues. Required for proteolytic maturation of thiol protease SspB and inactivation of SspC, an inhibitor of SspB. It is the most important protease for degradation of fibronectin-binding protein (FnBP) and surface protein A, which are involved in adherence to host cells. May also protect bacteria against host defense mechanism by cleaving the immunoglobulin classes IgG, IgA and IgM. May be involved in the stability of secreted lipases. In Staphylococcus aureus (strain COL), this protein is Glutamyl endopeptidase (sspA).